The primary structure comprises 237 residues: Uridylate kinase (237 aa).

11-14 contributes to the ATP binding site; the sequence is KLSG. Glycine 53 contacts UMP. 2 residues coordinate ATP: glycine 54 and arginine 58. UMP is bound by residues aspartate 73 and 134 to 141; that span reads TGNPFFTT. ATP-binding residues include threonine 161, tyrosine 167, and aspartate 170.

Belongs to the UMP kinase family. As to quaternary structure, homohexamer.

The protein resides in the cytoplasm. The enzyme catalyses UMP + ATP = UDP + ADP. Its pathway is pyrimidine metabolism; CTP biosynthesis via de novo pathway; UDP from UMP (UMPK route): step 1/1. With respect to regulation, inhibited by UTP. Functionally, catalyzes the reversible phosphorylation of UMP to UDP. The protein is Uridylate kinase of Burkholderia lata (strain ATCC 17760 / DSM 23089 / LMG 22485 / NCIMB 9086 / R18194 / 383).